The sequence spans 676 residues: MTSTKDKIEKLRKILLKYEYFYHTLNQSIISDAEYDYLFRQLYELELKNKELIPSDSPTQKVGSHILQKFKKIKHFSPMLSLENTFDVNGYLNFKKRIKKSIHNNEPLSFCCELKLDGVAISIIYEEGIFVRAATRGDGFEGENITSNARMIDSIPLKLKGIDIPKRLEIRGEVFMLKSNFIKLNKKYKLNQNKYFSNPRNAAAGSLRHIDPNITAERKLIFSCHGCDFFVKTNKELTTHYQRLMKCLSWGIPVNKEIVICSSDIEIIQFYKKIAQKRNFLDFDIDGIVIKVNSLELQKKIGSTTKSPRWAIAFKFSPKERITTLNDVKFQVGRTGVITPVAYFNPVYISGVMISKASLHNKNEIERLNLHFNDTITICRSGDVIPRLLNVIEIRRCDNAKKIIFPSFCPVCNTELLENIEEKLIRCHSGLTCDAQKKQALYHFFSKKSLYVVGLGPKIINELVEKGLVKNPIDFFYLKDIDLIQLKNVGKRKSIKIINSIKKCKKTTLKCFIYALGIPGVGEVVAGKIANYFIKLDKLMNSNILELNCISGVGKIISNNIFNYFSTISNREMVVKLIKQAGIFLNDQEIHKINSEKTYFFNKKIVLTGVFKSFSRIELKTILLSLGAKISNNISRKTDFLIYGNNFGSKFFRAKDLDVKIINQEELNSLIRIKEQ.

Residues Asp-32–Asp-36, Ser-81–Leu-82, and Glu-113 each bind NAD(+). Lys-115 acts as the N6-AMP-lysine intermediate in catalysis. NAD(+)-binding residues include Arg-136, Glu-173, Lys-291, and Lys-315. Zn(2+) is bound by residues Cys-409, Cys-412, Cys-427, and Cys-433. Positions Ser-595–Gln-676 constitute a BRCT domain.

This sequence belongs to the NAD-dependent DNA ligase family. LigA subfamily. It depends on Mg(2+) as a cofactor. Requires Mn(2+) as cofactor.

It catalyses the reaction NAD(+) + (deoxyribonucleotide)n-3'-hydroxyl + 5'-phospho-(deoxyribonucleotide)m = (deoxyribonucleotide)n+m + AMP + beta-nicotinamide D-nucleotide.. Functionally, DNA ligase that catalyzes the formation of phosphodiester linkages between 5'-phosphoryl and 3'-hydroxyl groups in double-stranded DNA using NAD as a coenzyme and as the energy source for the reaction. It is essential for DNA replication and repair of damaged DNA. This chain is DNA ligase, found in Buchnera aphidicola subsp. Acyrthosiphon pisum (strain Tuc7).